Here is a 393-residue protein sequence, read N- to C-terminus: GDP-mannose:cellobiosyl-diphosphopolyprenol alpha-mannosyltransferase (393 aa).

Belongs to the glycosyltransferase group 1 family. Glycosyltransferase 4 subfamily.

The catalysed reaction is beta-D-Glc-(1-&gt;4)-alpha-D-Glc-di-trans,octa-cis-undecaprenyl diphosphate + GDP-alpha-D-mannose = alpha-D-Man-(1-&gt;3)-beta-D-Glc-(1-&gt;4)-alpha-D-Glc-1-di-trans,octa-cis-undecaprenyl diphosphate + GDP + H(+). Involved in the biosynthesis of the exopolysaccharide acetan, a water-soluble polysaccharide involved in production of bacterial cellulose (BC). This chain is GDP-mannose:cellobiosyl-diphosphopolyprenol alpha-mannosyltransferase (aceC), found in Komagataeibacter xylinus (Gluconacetobacter xylinus).